The primary structure comprises 399 residues: MIITSLLDTDLYKFTMMQVVLHHFPAANVEYRFRCRTPGVDLVPYIDEIRDEVRGLCSLRFVDVELDYLRRMRFIKSDFVDFLALFHLNEKYISITPSPKGNGEIDIVIEGPWLHTILFEIPVLAIVNEVYFRNTQREPDYREGRERLREKIKLLGAKPEFADCKIADYGTRRRFSKVWHEEVALTLRDGLGPQFAGTSNVLYAMKHDITPLGTMAHEYLQACQALGPRLRDSQIYGFEMWAKEYRGDLGIALSDVYGMDAFLNDFDMYFCKLFDGARHDSGDPFEWGERMLRHYEANRCDPRTKVLVFSDALDIPKVMQLYERFRGRCKLAFGVGTNLTNDLGYVPLQIVIKMVRCNGQPVAKLSDSPGKSMCDDKAYLAYLRQVFGIAQPVEEDASK.

Histidine 217 bears the Phosphohistidine; by autocatalysis mark.

It belongs to the NAPRTase family. Transiently phosphorylated on a His residue during the reaction cycle. Phosphorylation strongly increases the affinity for substrates and increases the rate of nicotinate D-ribonucleotide production. Dephosphorylation regenerates the low-affinity form of the enzyme, leading to product release.

The catalysed reaction is nicotinate + 5-phospho-alpha-D-ribose 1-diphosphate + ATP + H2O = nicotinate beta-D-ribonucleotide + ADP + phosphate + diphosphate. Its pathway is cofactor biosynthesis; NAD(+) biosynthesis; nicotinate D-ribonucleotide from nicotinate: step 1/1. In terms of biological role, catalyzes the synthesis of beta-nicotinate D-ribonucleotide from nicotinate and 5-phospho-D-ribose 1-phosphate at the expense of ATP. This chain is Nicotinate phosphoribosyltransferase, found in Burkholderia orbicola (strain MC0-3).